The sequence spans 123 residues: Small ribosomal subunit protein uS12 (123 aa).

A disordered region spans residues 1–47 (MPTINQLVRKGRKKAEKKQSTPALKGGPQKRGVCTRVYTSTPKKPNS). A 3-methylthioaspartic acid modification is found at Asp-89.

It belongs to the universal ribosomal protein uS12 family. Part of the 30S ribosomal subunit. Contacts proteins S8 and S17. May interact with IF1 in the 30S initiation complex.

Its function is as follows. With S4 and S5 plays an important role in translational accuracy. Functionally, interacts with and stabilizes bases of the 16S rRNA that are involved in tRNA selection in the A site and with the mRNA backbone. Located at the interface of the 30S and 50S subunits, it traverses the body of the 30S subunit contacting proteins on the other side and probably holding the rRNA structure together. The combined cluster of proteins S8, S12 and S17 appears to hold together the shoulder and platform of the 30S subunit. The sequence is that of Small ribosomal subunit protein uS12 from Desulforapulum autotrophicum (strain ATCC 43914 / DSM 3382 / VKM B-1955 / HRM2) (Desulfobacterium autotrophicum).